We begin with the raw amino-acid sequence, 169 residues long: Disulfide bond formation protein B (169 aa).

Residues 1–14 (MSNDTFYLKREKRF) are Cytoplasmic-facing. Residues 15–31 (LVLLGIICLSLIGGALY) form a helical membrane-spanning segment. Topologically, residues 32–49 (MQIALGEAPCPLCILQRY) are periplasmic. A disulfide bridge connects residues Cys41 and Cys44. Residues 50–64 (ALLFIAIFAFIGAAM) form a helical membrane-spanning segment. Residues 65 to 71 (NGRRGVT) lie on the Cytoplasmic side of the membrane. A helical transmembrane segment spans residues 72-89 (VFEALVTLSALCGIAAAG). At 90–144 (RHAWILAHPSDSCGIDILQPIVDGLPLATLFPTGFQVSGFCTTPYPPVLGLSLAQ) the chain is on the periplasmic side. Cysteines 102 and 130 form a disulfide. A helical transmembrane segment spans residues 145–163 (WALTAFVLTAILVPACIIR). Residues 164–169 (NRRKPY) lie on the Cytoplasmic side of the membrane.

Belongs to the DsbB family.

The protein resides in the cell inner membrane. Its function is as follows. Required for disulfide bond formation in some periplasmic proteins. Acts by oxidizing the DsbA protein. The polypeptide is Disulfide bond formation protein B (Pseudomonas syringae pv. tomato (strain ATCC BAA-871 / DC3000)).